The sequence spans 404 residues: MEDDAGNCGGLTAFALRLAKRLADDGDNSNRNVVFSPVSLYAALALVASGARGTTLDELVALLGAASLDDLEESVRRAVEVGLADESESGGPRVSYACGVWHDERLALKPAYRAADFQRQPKSSRKKINKWVSKATNKLIREILPDGSVHGGTALVLVNAIYFKGKWSNPFPRERTTTGKFHRLDGSSVDAPFMSSREDQYIGFYDGFKVLKLPYHRTMKNHGDGGDITPAILKHYGENVGLSMYIFLPDARDGLPALVDKMAVASSGTASSSFLRDHRPGRRRIKVGDLRVPRFKVSFYSEMNEVLKGMGIGAAFDVGKVDLSGMIDGELVVVEKVMHRAVVEVNEEGTEAAAATACTMKFLCLTLTSPVDFVADHPFAFFVVEEKSDAVLFAGHVLDPTSLE.

The segment at 349-373 (GTEAAAATACTMKFLCLTLTSPVDF) is RCL.

Belongs to the serpin family.

Its function is as follows. Probable serine protease inhibitor. The sequence is that of Serpin-Z2B from Oryza sativa subsp. japonica (Rice).